A 501-amino-acid chain; its full sequence is Dipeptide and tripeptide permease A (501 aa).

Residues 1-21 (MSTANNKPAESVSLNAFKQPR) are Cytoplasmic-facing. A helical transmembrane segment spans residues 22 to 44 (AFYLIFSIELWERFGYYGLQGIM). The Periplasmic portion of the chain corresponds to 45 to 59 (AVYLVKQLGMSEADS). A helical membrane pass occupies residues 60 to 80 (ITLFSSFSALVYGLVAIGGWL). At 81-89 (GDKVLGTKR) the chain is on the cytoplasmic side. The chain crosses the membrane as a helical span at residues 90 to 110 (VIMLGAIVLAIGYALVAWSGH). D111 is a topological domain (periplasmic). The chain crosses the membrane as a helical span at residues 112–132 (AAIVYMGMATIAVGNGLFKAN). Residues 133–153 (PSSLLSTCYDKNDPRLDGAFT) lie on the Cytoplasmic side of the membrane. Residues 154 to 174 (MYYMSINIGSFFSMLATPWLA) traverse the membrane as a helical segment. Residues 175–178 (ARFG) lie on the Periplasmic side of the membrane. The helical transmembrane segment at 179 to 199 (WSVAFALSVVGMVITIINFAF) threads the bilayer. Over 200-218 (CQKWVKQYGSKPDFAPVHM) the chain is Cytoplasmic. The helical transmembrane segment at 219 to 239 (GKLLATIAGVVVLVAIATWLL) threads the bilayer. Residues 240-246 (HNQGIAR) lie on the Periplasmic side of the membrane. The helical transmembrane segment at 247-267 (MVLGVVALGIVVIFAKETIGL) threads the bilayer. Residues 268-274 (KGAARRK) are Cytoplasmic-facing. A helical membrane pass occupies residues 275–295 (MIVAFLLMVEAIVFFVLYSQM). The Periplasmic segment spans residues 296-320 (PTSLNFFAIRNVEHSILGIAFEPEQ). A helical transmembrane segment spans residues 321-341 (YQALNPFWIMIGSPILAAIYN). The Cytoplasmic segment spans residues 342 to 352 (KMGDRLPMPHK). The chain crosses the membrane as a helical span at residues 353-373 (FAIGMVLCSGAFLVLPLGAKF). Residues 374–383 (ASDAGIVSVN) are Periplasmic-facing. The chain crosses the membrane as a helical span at residues 384–404 (WLILSYALQSIGELMISGLGL). Residues 405–414 (AMVAQLVPQR) lie on the Cytoplasmic side of the membrane. Residues 415-435 (LMGFIMGSWFLTTAGAAIIAG) form a helical membrane-spanning segment. Topologically, residues 436–459 (KIANLMAVPENVTDPLVSLEVYGH) are periplasmic. A helical membrane pass occupies residues 460-480 (VFLQIGIVTAVIAALMLLTAP). The Cytoplasmic portion of the chain corresponds to 481-501 (KLNRMTQDDSADLKARETAAA).

It belongs to the major facilitator superfamily. Proton-dependent oligopeptide transporter (POT/PTR) (TC 2.A.17) family. DtpA subfamily.

Its subcellular location is the cell inner membrane. Proton-dependent permease that transports di- and tripeptides. The polypeptide is Dipeptide and tripeptide permease A (Klebsiella pneumoniae (strain 342)).